Reading from the N-terminus, the 77-residue chain is Beta-defensin 135 (77 aa).

The N-terminal stretch at 1–24 is a signal peptide; it reads MATRSVLLALVVLNLLFYVPPGRS. Disulfide bonds link C37/C64, C44/C58, and C48/C65.

Belongs to the beta-defensin family.

It is found in the secreted. Its function is as follows. Has antibacterial activity. The sequence is that of Beta-defensin 135 (DEFB135) from Homo sapiens (Human).